A 343-amino-acid polypeptide reads, in one-letter code: Protein RecA (343 aa).

This sequence belongs to the RecA family.

The protein resides in the cytoplasm. In terms of biological role, can catalyze the hydrolysis of ATP in the presence of single-stranded DNA, the ATP-dependent uptake of single-stranded DNA by duplex DNA, and the ATP-dependent hybridization of homologous single-stranded DNAs. It interacts with LexA causing its activation and leading to its autocatalytic cleavage. This chain is Protein RecA, found in Coxiella burnetii (strain RSA 493 / Nine Mile phase I).